A 122-amino-acid polypeptide reads, in one-letter code: Large ribosomal subunit protein uL14 (122 aa).

The protein belongs to the universal ribosomal protein uL14 family. As to quaternary structure, part of the 50S ribosomal subunit. Forms a cluster with proteins L3 and L19. In the 70S ribosome, L14 and L19 interact and together make contacts with the 16S rRNA in bridges B5 and B8.

In terms of biological role, binds to 23S rRNA. Forms part of two intersubunit bridges in the 70S ribosome. In Micrococcus luteus (Micrococcus lysodeikticus), this protein is Large ribosomal subunit protein uL14.